The sequence spans 128 residues: ADA histone acetyltransferase complex component 2 (128 aa).

The protein localises to the cytoplasm. It localises to the nucleus. The protein is ADA histone acetyltransferase complex component 2 (AHC2) of Saccharomyces cerevisiae (strain ATCC 204508 / S288c) (Baker's yeast).